The following is a 377-amino-acid chain: Succinyl-diaminopimelate desuccinylase (377 aa).

Position 68 (His-68) interacts with Zn(2+). Asp-70 is a catalytic residue. Asp-101 is a binding site for Zn(2+). Glu-135 functions as the Proton acceptor in the catalytic mechanism. Glu-136, Glu-164, and His-350 together coordinate Zn(2+).

It belongs to the peptidase M20A family. DapE subfamily. As to quaternary structure, homodimer. Zn(2+) is required as a cofactor. Co(2+) serves as cofactor.

The catalysed reaction is N-succinyl-(2S,6S)-2,6-diaminopimelate + H2O = (2S,6S)-2,6-diaminopimelate + succinate. The protein operates within amino-acid biosynthesis; L-lysine biosynthesis via DAP pathway; LL-2,6-diaminopimelate from (S)-tetrahydrodipicolinate (succinylase route): step 3/3. Its function is as follows. Catalyzes the hydrolysis of N-succinyl-L,L-diaminopimelic acid (SDAP), forming succinate and LL-2,6-diaminopimelate (DAP), an intermediate involved in the bacterial biosynthesis of lysine and meso-diaminopimelic acid, an essential component of bacterial cell walls. The protein is Succinyl-diaminopimelate desuccinylase of Acinetobacter baumannii (strain AB307-0294).